The chain runs to 283 residues: Polyamine aminopropyltransferase (283 aa).

A PABS domain is found at 2–238 (ELWYTEEWTE…GHWLFGFASK (237 aa)). Gln31 contributes to the S-methyl-5'-thioadenosine binding site. Residues His62 and Asp86 each coordinate spermidine. Residues Glu106 and 137–138 (DG) contribute to the S-methyl-5'-thioadenosine site. Catalysis depends on Asp156, which acts as the Proton acceptor. 156 to 159 (DSTD) contacts spermidine. Pro163 provides a ligand contact to S-methyl-5'-thioadenosine.

This sequence belongs to the spermidine/spermine synthase family. As to quaternary structure, homodimer or homotetramer.

It localises to the cytoplasm. The enzyme catalyses S-adenosyl 3-(methylsulfanyl)propylamine + putrescine = S-methyl-5'-thioadenosine + spermidine + H(+). It functions in the pathway amine and polyamine biosynthesis; spermidine biosynthesis; spermidine from putrescine: step 1/1. Its function is as follows. Catalyzes the irreversible transfer of a propylamine group from the amino donor S-adenosylmethioninamine (decarboxy-AdoMet) to putrescine (1,4-diaminobutane) to yield spermidine. The chain is Polyamine aminopropyltransferase from Clostridioides difficile (strain 630) (Peptoclostridium difficile).